Reading from the N-terminus, the 278-residue chain is 4-hydroxy-tetrahydrodipicolinate reductase (278 aa).

Residues 13–18 (GAAGKM) and 111–113 (GTT) contribute to the NAD(+) site. Catalysis depends on histidine 167, which acts as the Proton donor/acceptor. Histidine 168 provides a ligand contact to (S)-2,3,4,5-tetrahydrodipicolinate. The active-site Proton donor is lysine 171. Residue 177–178 (GT) participates in (S)-2,3,4,5-tetrahydrodipicolinate binding.

Belongs to the DapB family.

The protein localises to the cytoplasm. The catalysed reaction is (S)-2,3,4,5-tetrahydrodipicolinate + NAD(+) + H2O = (2S,4S)-4-hydroxy-2,3,4,5-tetrahydrodipicolinate + NADH + H(+). The enzyme catalyses (S)-2,3,4,5-tetrahydrodipicolinate + NADP(+) + H2O = (2S,4S)-4-hydroxy-2,3,4,5-tetrahydrodipicolinate + NADPH + H(+). Its pathway is amino-acid biosynthesis; L-lysine biosynthesis via DAP pathway; (S)-tetrahydrodipicolinate from L-aspartate: step 4/4. Its function is as follows. Catalyzes the conversion of 4-hydroxy-tetrahydrodipicolinate (HTPA) to tetrahydrodipicolinate. This is 4-hydroxy-tetrahydrodipicolinate reductase from Mastigocladus laminosus (Fischerella sp.).